The following is a 457-amino-acid chain: Multidrug resistance protein MdtK (457 aa).

12 helical membrane passes run L11 to V31, I53 to A73, W93 to I113, A127 to A147, G160 to Y180, L188 to M208, L243 to V263, I276 to T296, A314 to V334, V350 to I370, I387 to A407, and P418 to L438.

It belongs to the multi antimicrobial extrusion (MATE) (TC 2.A.66.1) family. MdtK subfamily.

It localises to the cell inner membrane. Functionally, multidrug efflux pump that functions probably as a Na(+)/drug antiporter. This chain is Multidrug resistance protein MdtK, found in Salmonella agona (strain SL483).